A 259-amino-acid chain; its full sequence is MNILAPVRRDRVLAELPQCLKKEAALHVRKDFHPRVTCACQEHRTGTVGFKISKVIVVGDLSVGKTCLINRFCKDTFDKNYKATIGVDFEMERFEVLGVPFSLQLWDTAGQERFKCIASTYYRGAQAIIIVFNLNDVASLEHTKQWLTDALKENDPSNVLLFLVGSKKDLSTPAQYSLMEKDALKVAQEIKAEYWAVSSLTGENVREFFFRVAALTFEANVLADVEKSGARHIADVVRINSDDKNLYLTASKKKATCCP.

Methionine 1 carries the post-translational modification N-acetylmethionine. 8 residues coordinate GTP: serine 62, valine 63, glycine 64, lysine 65, threonine 66, aspartate 78, tyrosine 81, and threonine 84. Residue threonine 66 participates in Mg(2+) binding. The short motif at 71–89 is the Switch 1 element; it reads RFCKDTFDKNYKATIGVDF. Residues threonine 84 and aspartate 107 each contribute to the Mg(2+) site. The Switch 2 motif lies at 108–127; it reads TAGQERFKCIASTYYRGAQA. Residues glycine 110, lysine 167, aspartate 169, and serine 198 each contribute to the GTP site. Residue serine 241 is modified to Phosphoserine. S-geranylgeranyl cysteine attachment occurs at residues cysteine 257 and cysteine 258.

It belongs to the small GTPase superfamily. Rab family. In terms of assembly, interacts with RILP. The GTP-bound form interacts with REP15. The cofactor is Mg(2+).

It is found in the cytoplasm. Its subcellular location is the golgi apparatus. The protein resides in the cytoplasmic vesicle. It localises to the phagosome. The protein localises to the phagosome membrane. It is found in the cell projection. Its subcellular location is the cilium. The protein resides in the cytoskeleton. It localises to the microtubule organizing center. The protein localises to the centrosome. It is found in the centriole. It carries out the reaction GTP + H2O = GDP + phosphate + H(+). Its activity is regulated as follows. Regulated by guanine nucleotide exchange factors (GEFs) which promote the exchange of bound GDP for free GTP. Regulated by GTPase activating proteins (GAPs) which increase the GTP hydrolysis activity. Inhibited by GDP dissociation inhibitors (GDIs). Its function is as follows. The small GTPases Rab are key regulators of intracellular membrane trafficking, from the formation of transport vesicles to their fusion with membranes. Rabs cycle between an inactive GDP-bound form and an active GTP-bound form that is able to recruit to membranes different sets of downstream effectors directly responsible for vesicle formation, movement, tethering and fusion. RAB34 transports protein involved in the redistribution of lysosomes to the peri-Golgi region. Plays a role in the maturation of phagosomes that engulf pathogens, such as S.aureus and M.tuberculosis. Plays a role in the fusion of phagosomes with lysosomes. Required for the early steps of intracellular ciliogenesis, the cilium assembly pathway initiated by trafficking and docking of ciliary vesicles to the centrioles in the cytoplasm, followed by axoneme formation in the cytoplasm. After axoneme elongation, the centrioles migrate close to the cell surface so that ciliary vesicles can fuse with the plasma membrane to expose cilia to the extracellular space. It seems dispensable for ciliogenesis via the extracellular pathway where cilium assembly begins after migration and docking of the centriole to the plasma membrane. Also acts as a positive regulator of hedgehog signaling and regulates ciliary function. In Mus musculus (Mouse), this protein is Ras-related protein Rab-34.